The primary structure comprises 176 residues: Flavodoxin (176 aa).

Residues 4–165 (IGIFFGSDTG…RVEKWVKQVA (162 aa)) enclose the Flavodoxin-like domain.

This sequence belongs to the flavodoxin family. It depends on FMN as a cofactor.

Functionally, low-potential electron donor to a number of redox enzymes. This is Flavodoxin (fldA) from Klebsiella pneumoniae.